The primary structure comprises 323 residues: MRAATLYRYSIPMEAGVILRHQRLKSRDGLLVKLQQGEQTGWGEIAPLPEFSQETLPEAQAAAIAELQRWVNGEELDLGPLPSVAFGLSCALAELEKLLPLSADYHKAPLCTGDPDELFAVLQALPGEKVAKVKVGLYEAVRDGMIVNVLLEALPDLKLRLDANRSWTRAKADGFAKYVNPELRSRIAFLEEPCKTRAESREFARDTGIAIAWDESVREADFQVEAEPGVAAIVIKPTLVGSIARCQQLVQQAHQAGLEAVISSSIESSLGLTQLARLADWLTPATVPGLDTLSLMQAQCIRQWPDSTLPVVTVDQLDVLWHS.

Lysine 134 functions as the Proton donor in the catalytic mechanism. Aspartate 162, glutamate 191, and aspartate 214 together coordinate Mg(2+). The active-site Proton acceptor is the lysine 236.

This sequence belongs to the mandelate racemase/muconate lactonizing enzyme family. MenC type 1 subfamily. A divalent metal cation is required as a cofactor.

It carries out the reaction (1R,6R)-6-hydroxy-2-succinyl-cyclohexa-2,4-diene-1-carboxylate = 2-succinylbenzoate + H2O. Its pathway is quinol/quinone metabolism; 1,4-dihydroxy-2-naphthoate biosynthesis; 1,4-dihydroxy-2-naphthoate from chorismate: step 4/7. It functions in the pathway quinol/quinone metabolism; menaquinone biosynthesis. Its function is as follows. Converts 2-succinyl-6-hydroxy-2,4-cyclohexadiene-1-carboxylate (SHCHC) to 2-succinylbenzoate (OSB). In Yersinia enterocolitica serotype O:8 / biotype 1B (strain NCTC 13174 / 8081), this protein is o-succinylbenzoate synthase.